Reading from the N-terminus, the 683-residue chain is Methionine--tRNA ligase (683 aa).

Residues 15 to 25 (YYPSGKLHIGN) carry the 'HIGH' region motif. Positions 311 to 315 (KMSKS) match the 'KMSKS' region motif. Lys314 serves as a coordination point for ATP. Positions 581–683 (DFDKVELKVA…DNMVNGSLIS (103 aa)) constitute a tRNA-binding domain.

This sequence belongs to the class-I aminoacyl-tRNA synthetase family. MetG type 2B subfamily. As to quaternary structure, homodimer.

It localises to the cytoplasm. The enzyme catalyses tRNA(Met) + L-methionine + ATP = L-methionyl-tRNA(Met) + AMP + diphosphate. In terms of biological role, is required not only for elongation of protein synthesis but also for the initiation of all mRNA translation through initiator tRNA(fMet) aminoacylation. This chain is Methionine--tRNA ligase, found in Lactiplantibacillus plantarum (strain ATCC BAA-793 / NCIMB 8826 / WCFS1) (Lactobacillus plantarum).